A 144-amino-acid chain; its full sequence is HTH-type transcriptional regulator LrpC (144 aa).

Positions 3-64 (LDQIDLNIIE…EVDQKKLGLP (62 aa)) constitute an HTH asnC-type domain. Residues 22-41 (MRELGRKIKLSPPSVTERVR) constitute a DNA-binding region (H-T-H motif).

Functionally, transcriptional regulator with a possible role in regulation of amino acid metabolism. Plays a role in the growth phase transition. The sequence is that of HTH-type transcriptional regulator LrpC (lrpC) from Bacillus subtilis (strain 168).